Here is a 766-residue protein sequence, read N- to C-terminus: DNA ligase (766 aa).

Residues 1–30 (MSTVNAKGAKPATDANGQSLNPEEPSEALR) are disordered. NAD(+) contacts are provided by residues 57 to 61 (DAEYD), 106 to 107 (SL), and E141. K143 serves as the catalytic N6-AMP-lysine intermediate. Positions 164, 201, 317, and 341 each coordinate NAD(+). Zn(2+)-binding residues include C435, C438, C454, and C460. In terms of domain architecture, BRCT spans 669–758 (STPRTLEGVT…PEAFGDRADA (90 aa)). Positions 747 to 766 (QGPEAFGDRADAADQPAAGE) are disordered.

Belongs to the NAD-dependent DNA ligase family. LigA subfamily. Mg(2+) is required as a cofactor. Mn(2+) serves as cofactor.

The catalysed reaction is NAD(+) + (deoxyribonucleotide)n-3'-hydroxyl + 5'-phospho-(deoxyribonucleotide)m = (deoxyribonucleotide)n+m + AMP + beta-nicotinamide D-nucleotide.. Functionally, DNA ligase that catalyzes the formation of phosphodiester linkages between 5'-phosphoryl and 3'-hydroxyl groups in double-stranded DNA using NAD as a coenzyme and as the energy source for the reaction. It is essential for DNA replication and repair of damaged DNA. This chain is DNA ligase, found in Kocuria rhizophila (strain ATCC 9341 / DSM 348 / NBRC 103217 / DC2201).